Reading from the N-terminus, the 497-residue chain is Delayed-rectifier potassium channel regulatory subunit KCNS1 (497 aa).

Over 1–186 (MVSEFPGPGS…LTMENPGYSL (186 aa)) the chain is Cytoplasmic. Residues 187 to 208 (PSKLFSCVSIGVVLASIAAMCI) form a helical membrane-spanning segment. The Extracellular segment spans residues 209–239 (HSLPEYQAREAAAAVAAVAAGRSAEEVRDDP). The helical transmembrane segment at 240–262 (VLRRLEYFCIAWFSFEVSSRLLL) threads the bilayer. Over 263–273 (APSTRNFFCHP) the chain is Cytoplasmic. The helical transmembrane segment at 274–291 (LNLIDIVSVLPFYLTLLA) threads the bilayer. Residues 292-309 (GAALGDQRGASGEELGDL) are Extracellular-facing. The chain crosses the membrane as a helical; Voltage-sensor span at residues 310–330 (GKVVQVFRLMRIFRVLKLARH). Residues 331–345 (STGLRSLGATLKHSY) are Cytoplasmic-facing. The chain crosses the membrane as a helical span at residues 346–367 (REVGILLLYLAVGVSVFSGVAY). Over 368–379 (TAEEENEGFHTI) the chain is Extracellular. The helical intramembrane region spans 380 to 391 (PACWWWGTVSMT). The short motif at 392-397 (TVGYGD) is the Selectivity filter element. The stretch at 392-399 (TVGYGDVV) is an intramembrane region. Over 400 to 406 (PETVGGK) the chain is Extracellular. A helical membrane pass occupies residues 407-435 (LAASGCILGGILVVALPITIIFNKFSHFY). Topologically, residues 436 to 497 (RRQKALEAAV…PREPAKSHSY (62 aa)) are cytoplasmic. Residues 464 to 497 (SDVSLETSRDTSQEGRSTDLETQAPREPAKSHSY) form a disordered region. Residues 470 to 482 (TSRDTSQEGRSTD) show a composition bias toward basic and acidic residues.

This sequence belongs to the potassium channel family. S (TC 1.A.1.2) subfamily. Kv9.1/KCNS1 sub-subfamily. Heterotetramer with KCNB1 and KCNB2. Does not form homomultimers. As to expression, detected in brain, but not in the other tissues tested. The highest levels of expression are in olfactory bulb, cerebral cortex, hippocampus, habenula, basolateral amygdaloid nuclei and cerebellum.

The protein resides in the cell membrane. Its function is as follows. Potassium channel regulatory subunit that modulate the delayed rectifier voltage-gated potassium channel activity of KCNB1 and KCNB2 by altering their kinetics, expression levels, and shifting the half-inactivation potential to more polarized values. While it does not form functional channels on its own, it can form functional heterotetrameric channels with KCNB1 and KCNB2. Each regulatory subunit has unique regulatory properties that can lead to extensive inhibition, significant changes in kinetics, and/or substantial shifts in the voltage dependencies of the inactivation process. This chain is Delayed-rectifier potassium channel regulatory subunit KCNS1, found in Mus musculus (Mouse).